The primary structure comprises 160 residues: Small ribosomal subunit protein uS9 (160 aa).

Belongs to the universal ribosomal protein uS9 family.

This chain is Small ribosomal subunit protein uS9, found in Bradyrhizobium sp. (strain ORS 278).